The chain runs to 152 residues: Ninjurin-1 (152 aa).

Methionine 1 carries the N-acetylmethionine modification. Residues methionine 1–proline 26 are disordered. Topologically, residues methionine 1–valine 78 are extracellular. Phosphoserine occurs at positions 21 and 25. Residues proline 26 to asparagine 37 form an N-terminal adhesion motif region. A required to induce plasma membrane rupture region spans residues histidine 40–glutamate 69. The tract at residues lysine 44 to alanine 55 is helix alpha1. The tract at residues methionine 58–phenylalanine 74 is helix alpha2. Asparagine 60 carries an N-linked (GlcNAc...) asparagine glycan. A helical membrane pass occupies residues proline 79–lysine 103. The Cytoplasmic segment spans residues tyrosine 104 to alanine 113. A helical transmembrane segment spans residues lysine 114–alanine 138. At phenylalanine 139 to glutamine 152 the chain is on the extracellular side.

The protein belongs to the ninjurin family. Homodimer; in absence of death stimuli, forms an inactive homodimer. Homooligomer; in response to death stimuli, homooligomerizes into long, highly branched filaments and large, ring-shaped structures in the membrane. Cleaved by MMP9 protease to generate the Secreted ninjurin-1 form. Post-translationally, N-linked glycosylation is required for homooligomerization. As to expression, widely expressed in both adult and embryonic tissues, primarily those of epithelial origin.

It localises to the cell membrane. The protein localises to the synaptic cell membrane. The protein resides in the secreted. Its activity is regulated as follows. In response to death stimuli, homooligomerizes and disrupts membrane integrity by introducing the hydrophilic faces of alpha1 and alpha2 helices into the hydrophobic membrane. Homooligomerization and ability to mediate plasma membrane rupture is inhibited by glycine; it is unclear whether glycine directly or indirectly inhibits homooligomerization. In normal conditions, NINJ1 is autoinhibited via formation of a homodimer: in the inactive homodimer, the alpha1 and alpha2 helices (residues 44-74) form a single transmembrane region without a kink, in which hydrophilic faces of alpha1 and alpha2 helices are sequestered. Functionally, effector of various programmed cell death, such as pyroptosis and necroptosis, which mediates plasma membrane rupture (cytolysis). Oligomerizes in response to death stimuli and forms ring-like structures on the plasma membrane: acts by cutting and shedding membrane disks, like a cookie cutter, leading to membrane damage and loss that cannot be repaired by the cell. Plasma membrane rupture leads to release intracellular molecules named damage-associated molecular patterns (DAMPs) that propagate the inflammatory response. Mechanistically, mediates plasma membrane rupture by introducing hydrophilic faces of 2 alpha helices into the hydrophobic membrane. Induces plasma membrane rupture downstream of Gasdermin (GSDMA, GSDMB, GSDMC, GSDMD, or GSDME) or MLKL during pyroptosis or necroptosis, respectively. Acts as an effector of PANoptosis downstream of CASP1, CASP4, CASP8 and RIPK3. Also induces plasma membrane rupture in response to cell swelling caused by osmotic stress and ferroptosis downstream of lipid peroxidation. Acts as a regulator of Toll-like receptor 4 (TLR4) signaling triggered by lipopolysaccharide (LPS) during systemic inflammation; directly binds LPS. Involved in leukocyte migration during inflammation by promoting transendothelial migration of macrophages via homotypic binding. Promotes the migration of monocytes across the brain endothelium to central nervous system inflammatory lesions. Also acts as a homophilic transmembrane adhesion molecule involved in various processes such as axonal growth, cell chemotaxis and angiogenesis. Promotes cell adhesion by mediating homophilic interactions via its extracellular N-terminal adhesion motif (N-NAM). Involved in the progression of the inflammatory stress by promoting cell-to-cell interactions between immune cells and endothelial cells. Plays a role in nerve regeneration by promoting maturation of Schwann cells. Acts as a regulator of angiogenesis. Promotes the formation of new vessels by mediating the interaction between capillary pericyte cells and endothelial cells. Promotes osteoclasts development by enhancing the survival of prefusion osteoclasts. Also involved in striated muscle growth and differentiation. In terms of biological role, secreted form generated by cleavage, which has chemotactic activity. Acts as an anti-inflammatory mediator by promoting monocyte recruitment, thereby ameliorating atherosclerosis. The polypeptide is Ninjurin-1 (Homo sapiens (Human)).